Here is a 253-residue protein sequence, read N- to C-terminus: Imidazole glycerol phosphate synthase subunit HisF (253 aa).

Residues aspartate 11 and aspartate 130 contribute to the active site.

It belongs to the HisA/HisF family. In terms of assembly, heterodimer of HisH and HisF.

It is found in the cytoplasm. It carries out the reaction 5-[(5-phospho-1-deoxy-D-ribulos-1-ylimino)methylamino]-1-(5-phospho-beta-D-ribosyl)imidazole-4-carboxamide + L-glutamine = D-erythro-1-(imidazol-4-yl)glycerol 3-phosphate + 5-amino-1-(5-phospho-beta-D-ribosyl)imidazole-4-carboxamide + L-glutamate + H(+). The protein operates within amino-acid biosynthesis; L-histidine biosynthesis; L-histidine from 5-phospho-alpha-D-ribose 1-diphosphate: step 5/9. IGPS catalyzes the conversion of PRFAR and glutamine to IGP, AICAR and glutamate. The HisF subunit catalyzes the cyclization activity that produces IGP and AICAR from PRFAR using the ammonia provided by the HisH subunit. The polypeptide is Imidazole glycerol phosphate synthase subunit HisF (Cereibacter sphaeroides (strain ATCC 17029 / ATH 2.4.9) (Rhodobacter sphaeroides)).